The chain runs to 502 residues: Probable glycine dehydrogenase (decarboxylating) subunit 2 (502 aa).

N6-(pyridoxal phosphate)lysine is present on K273.

It belongs to the GcvP family. C-terminal subunit subfamily. As to quaternary structure, the glycine cleavage system is composed of four proteins: P, T, L and H. In this organism, the P 'protein' is a heterodimer of two subunits. It depends on pyridoxal 5'-phosphate as a cofactor.

It carries out the reaction N(6)-[(R)-lipoyl]-L-lysyl-[glycine-cleavage complex H protein] + glycine + H(+) = N(6)-[(R)-S(8)-aminomethyldihydrolipoyl]-L-lysyl-[glycine-cleavage complex H protein] + CO2. In terms of biological role, the glycine cleavage system catalyzes the degradation of glycine. The P protein binds the alpha-amino group of glycine through its pyridoxal phosphate cofactor; CO(2) is released and the remaining methylamine moiety is then transferred to the lipoamide cofactor of the H protein. This chain is Probable glycine dehydrogenase (decarboxylating) subunit 2, found in Pyrococcus furiosus (strain ATCC 43587 / DSM 3638 / JCM 8422 / Vc1).